Here is a 694-residue protein sequence, read N- to C-terminus: Glycine--tRNA ligase beta subunit (694 aa).

This sequence belongs to the class-II aminoacyl-tRNA synthetase family. In terms of assembly, tetramer of two alpha and two beta subunits.

It localises to the cytoplasm. It carries out the reaction tRNA(Gly) + glycine + ATP = glycyl-tRNA(Gly) + AMP + diphosphate. This chain is Glycine--tRNA ligase beta subunit, found in Acidithiobacillus ferrooxidans (strain ATCC 23270 / DSM 14882 / CIP 104768 / NCIMB 8455) (Ferrobacillus ferrooxidans (strain ATCC 23270)).